Reading from the N-terminus, the 253-residue chain is Small ribosomal subunit protein uS2 (253 aa).

It belongs to the universal ribosomal protein uS2 family.

This chain is Small ribosomal subunit protein uS2, found in Cereibacter sphaeroides (strain ATCC 17023 / DSM 158 / JCM 6121 / CCUG 31486 / LMG 2827 / NBRC 12203 / NCIMB 8253 / ATH 2.4.1.) (Rhodobacter sphaeroides).